We begin with the raw amino-acid sequence, 337 residues long: Holliday junction branch migration complex subunit RuvB (337 aa).

Residues 4–184 form a large ATPase domain (RuvB-L) region; the sequence is ADRLIAPAAI…FGIVQRLEFY (181 aa). ATP contacts are provided by residues I23, R24, G65, K68, T69, T70, 131–133, R174, Y184, and R221; that span reads EDY. T69 contacts Mg(2+). Residues 185–255 form a small ATPAse domain (RuvB-S) region; that stretch reads KVEDLAHIVG…IAAQALDMLD (71 aa). Residues 258–337 form a head domain (RuvB-H) region; that stretch reads NAGFDYMDRK…FGLTTPERQG (80 aa). DNA contacts are provided by R313 and R318.

The protein belongs to the RuvB family. In terms of assembly, homohexamer. Forms an RuvA(8)-RuvB(12)-Holliday junction (HJ) complex. HJ DNA is sandwiched between 2 RuvA tetramers; dsDNA enters through RuvA and exits via RuvB. An RuvB hexamer assembles on each DNA strand where it exits the tetramer. Each RuvB hexamer is contacted by two RuvA subunits (via domain III) on 2 adjacent RuvB subunits; this complex drives branch migration. In the full resolvosome a probable DNA-RuvA(4)-RuvB(12)-RuvC(2) complex forms which resolves the HJ.

It localises to the cytoplasm. It catalyses the reaction ATP + H2O = ADP + phosphate + H(+). Functionally, the RuvA-RuvB-RuvC complex processes Holliday junction (HJ) DNA during genetic recombination and DNA repair, while the RuvA-RuvB complex plays an important role in the rescue of blocked DNA replication forks via replication fork reversal (RFR). RuvA specifically binds to HJ cruciform DNA, conferring on it an open structure. The RuvB hexamer acts as an ATP-dependent pump, pulling dsDNA into and through the RuvAB complex. RuvB forms 2 homohexamers on either side of HJ DNA bound by 1 or 2 RuvA tetramers; 4 subunits per hexamer contact DNA at a time. Coordinated motions by a converter formed by DNA-disengaged RuvB subunits stimulates ATP hydrolysis and nucleotide exchange. Immobilization of the converter enables RuvB to convert the ATP-contained energy into a lever motion, pulling 2 nucleotides of DNA out of the RuvA tetramer per ATP hydrolyzed, thus driving DNA branch migration. The RuvB motors rotate together with the DNA substrate, which together with the progressing nucleotide cycle form the mechanistic basis for DNA recombination by continuous HJ branch migration. Branch migration allows RuvC to scan DNA until it finds its consensus sequence, where it cleaves and resolves cruciform DNA. In Tolumonas auensis (strain DSM 9187 / NBRC 110442 / TA 4), this protein is Holliday junction branch migration complex subunit RuvB.